Reading from the N-terminus, the 292-residue chain is Large ribosomal subunit protein mL67 (292 aa).

Residues 59–83 form a disordered region; it reads VELKSPSRLQLKSEPGNKGNPKGHG.

The protein belongs to the mitochondrion-specific ribosomal protein mL67 family. In terms of assembly, component of the mitochondrial large ribosomal subunit (mt-LSU). Mature N.crassa 74S mitochondrial ribosomes consist of a small (37S) and a large (54S) subunit. The 37S small subunit contains a 16S ribosomal RNA (16S mt-rRNA) and 32 different proteins. The 54S large subunit contains a 23S rRNA (23S mt-rRNA) and 42 different proteins.

It is found in the mitochondrion. Component of the mitochondrial ribosome (mitoribosome), a dedicated translation machinery responsible for the synthesis of mitochondrial genome-encoded proteins, including at least some of the essential transmembrane subunits of the mitochondrial respiratory chain. The mitoribosomes are attached to the mitochondrial inner membrane and translation products are cotranslationally integrated into the membrane. mL67/MHR1 also has extraribosomal functions, being involved in regulation of mitochondrial DNA recombination, maintenance and repair, and generation of homoplasmic cells. mL67/MHR1 also acts as a transcription factor involved in regulation of RNA polymerase II-dependent transcription. The chain is Large ribosomal subunit protein mL67 (mhr1) from Neurospora crassa (strain ATCC 24698 / 74-OR23-1A / CBS 708.71 / DSM 1257 / FGSC 987).